Here is a 247-residue protein sequence, read N- to C-terminus: STING ER exit protein (247 aa).

Position 127 is a phosphoserine (serine 127). The stretch at 195–216 (EAREIADSYANNARIIEKQLQR) forms a coiled coil. The tract at residues 215-247 (QRKGGKLSDVGIKTKTEDAPPPQKKQRGTLLER) is disordered.

The protein belongs to the STEEP1 family.

Molecular adapter that stimulates membrane curvature formation and subsequent endoplasmic reticulum exit site (ERES) establishment by recruiting PI3K complex I, leading to COPII vesicle-mediated transport. The protein is STING ER exit protein of Drosophila melanogaster (Fruit fly).